The sequence spans 78 residues: Small ribosomal subunit protein bS16c (78 aa).

The protein belongs to the bacterial ribosomal protein bS16 family.

The protein resides in the plastid. It localises to the chloroplast. This is Small ribosomal subunit protein bS16c from Amborella trichopoda.